We begin with the raw amino-acid sequence, 220 residues long: Probable nicotinate-nucleotide adenylyltransferase (220 aa).

This sequence belongs to the NadD family.

It carries out the reaction nicotinate beta-D-ribonucleotide + ATP + H(+) = deamido-NAD(+) + diphosphate. The protein operates within cofactor biosynthesis; NAD(+) biosynthesis; deamido-NAD(+) from nicotinate D-ribonucleotide: step 1/1. Its function is as follows. Catalyzes the reversible adenylation of nicotinate mononucleotide (NaMN) to nicotinic acid adenine dinucleotide (NaAD). The polypeptide is Probable nicotinate-nucleotide adenylyltransferase (Serratia proteamaculans (strain 568)).